Here is a 269-residue protein sequence, read N- to C-terminus: Phosphate import ATP-binding protein PstB 2 (269 aa).

The region spanning 23–264 (LHTEDLHVFY…PKIQATEDYV (242 aa)) is the ABC transporter domain. 55-62 (GPSGCGKS) provides a ligand contact to ATP.

This sequence belongs to the ABC transporter superfamily. Phosphate importer (TC 3.A.1.7) family. As to quaternary structure, the complex is composed of two ATP-binding proteins (PstB), two transmembrane proteins (PstC and PstA) and a solute-binding protein (PstS).

The protein localises to the cell membrane. It carries out the reaction phosphate(out) + ATP + H2O = ADP + 2 phosphate(in) + H(+). Functionally, part of the ABC transporter complex PstSACB involved in phosphate import. Responsible for energy coupling to the transport system. The protein is Phosphate import ATP-binding protein PstB 2 of Enterococcus faecalis (strain ATCC 700802 / V583).